The following is a 576-amino-acid chain: Probable lysosomal cobalamin transporter (576 aa).

10 helical membrane-spanning segments follow: residues 8–28 (LIWAVYAIVVAVLVMVASVFI), 40–60 (VVTFTCIVAITSLLATVLLLP), 98–118 (YLLYSLDAFLCLLAIPFVYFW), 145–165 (TISFIAIVVVLFIVGFLVPVA), 188–208 (VLTFTLGLLITMGLFLYILYT), 312–332 (LLGGIAILLITLMIWISMLLT), 347–367 (GYILSGIGVFNPINWIFVQSA), 377–397 (LTVVVLLLFGSSVVGISTIGI), 419–439 (LTTAMLMLTILALDYSIPMLV), and 503–523 (FFGTVFFWSQFIFLVIYLLVL). A disordered region spans residues 549–576 (RLLTSSARGVGDTYQSVGGRNNFSTRAG). Polar residues predominate over residues 561 to 576 (TYQSVGGRNNFSTRAG). The N-linked (GlcNAc...) asparagine glycan is linked to asparagine 570.

It belongs to the LIMR family. LMBRD1 subfamily.

Its subcellular location is the lysosome membrane. Its function is as follows. Probable lysosomal cobalamin transporter. Required to export cobalamin from lysosomes allowing its conversion to cofactors. In Aspergillus niger (strain ATCC MYA-4892 / CBS 513.88 / FGSC A1513), this protein is Probable lysosomal cobalamin transporter.